The sequence spans 334 residues: MGRRSSDTEEESRSKRKKKHRRRSSSSSSSDSRTYSRKKGGRKSRSKSRSWSRDLQPRSHSYDRRRRHRSSSSSSYGSRRKRSRSRSRGRGKSYRVQRSRSKSRTRRSRSRPRLRSHSRSSERSSHRRTRSRSRDRERRKGRDKEKREKEKDKGKDKELHNIKRGESGNIKAGLEHLPPAEQAKARLQLVLEAAAKADEALKAKERNEEEAKRRKEEDQATLVEQVKRVKEIEAIESDSFVQQTFRSSKEVKKSVEPSEVKQATSTSGPASAVADPPSTEKEIDPTSIPTAIKYQDDNSLAHPNLFIEKADAEEKWFKRLIALRQERLMGSPVA.

Residues 1–13 (MGRRSSDTEEESR) are compositionally biased toward basic and acidic residues. Disordered stretches follow at residues 1–179 (MGRR…HLPP), 201–220 (LKAK…EDQA), and 243–290 (QTFR…SIPT). Composition is skewed to basic residues over residues 14-24 (SKRKKKHRRRS) and 35-50 (YSRK…KSRS). Positions 51 to 62 (WSRDLQPRSHSY) are enriched in basic and acidic residues. Over residues 78–118 (SRRKRSRSRSRGRGKSYRVQRSRSKSRTRRSRSRPRLRSHS) the composition is skewed to basic residues. 3 stretches are compositionally biased toward basic and acidic residues: residues 132-166 (RSRD…KRGE), 201-218 (LKAK…KEED), and 247-259 (SSKE…EPSE). The stretch at 180–236 (AEQAKARLQLVLEAAAKADEALKAKERNEEEAKRRKEEDQATLVEQVKRVKEIEAIE) forms a coiled coil.

As to quaternary structure, interacts (via Arg/Ser-rich domain) with LUC7L3, RBM39 and RSF1. In terms of processing, phosphorylated. Widely expressed. Expressed in brain, spinal cord, cerebellum.

It is found in the nucleus. The protein localises to the nucleus speckle. The protein resides in the cytoplasm. Functionally, has a role in alternative splicing and transcription regulation. Involved in both constitutive and alternative pre-mRNA splicing. May have a role in the recognition of the 3' splice site during the second step of splicing. This Homo sapiens (Human) protein is Serine/Arginine-related protein 53 (RSRC1).